The sequence spans 447 residues: NADP-specific glutamate dehydrogenase (447 aa).

Lys-92, Gln-113, and Lys-116 together coordinate substrate. Lys-128 functions as the Proton donor in the catalytic mechanism. Residue Gly-167 participates in substrate binding. NADP(+) contacts are provided by Thr-211 and Asn-242. Residue Ser-380 participates in substrate binding.

Belongs to the Glu/Leu/Phe/Val dehydrogenases family. Homohexamer.

The enzyme catalyses L-glutamate + NADP(+) + H2O = 2-oxoglutarate + NH4(+) + NADPH + H(+). With respect to regulation, competitively inhibited by homoserine and by glutamine. Its function is as follows. Catalyzes the reversible oxidative deamination of glutamate to alpha-ketoglutarate and ammonia. In Escherichia coli (strain K12), this protein is NADP-specific glutamate dehydrogenase.